The chain runs to 311 residues: Lipoyl synthase (311 aa).

[4Fe-4S] cluster contacts are provided by Cys47, Cys52, Cys58, Cys73, Cys77, Cys80, and Ser287. Residues 59–276 (WTKKHATVMI…AQIARAKGFL (218 aa)) form the Radical SAM core domain.

It belongs to the radical SAM superfamily. Lipoyl synthase family. [4Fe-4S] cluster serves as cofactor.

The protein resides in the cytoplasm. It carries out the reaction [[Fe-S] cluster scaffold protein carrying a second [4Fe-4S](2+) cluster] + N(6)-octanoyl-L-lysyl-[protein] + 2 oxidized [2Fe-2S]-[ferredoxin] + 2 S-adenosyl-L-methionine + 4 H(+) = [[Fe-S] cluster scaffold protein] + N(6)-[(R)-dihydrolipoyl]-L-lysyl-[protein] + 4 Fe(3+) + 2 hydrogen sulfide + 2 5'-deoxyadenosine + 2 L-methionine + 2 reduced [2Fe-2S]-[ferredoxin]. It participates in protein modification; protein lipoylation via endogenous pathway; protein N(6)-(lipoyl)lysine from octanoyl-[acyl-carrier-protein]: step 2/2. Its function is as follows. Catalyzes the radical-mediated insertion of two sulfur atoms into the C-6 and C-8 positions of the octanoyl moiety bound to the lipoyl domains of lipoate-dependent enzymes, thereby converting the octanoylated domains into lipoylated derivatives. This is Lipoyl synthase from Sphingopyxis alaskensis (strain DSM 13593 / LMG 18877 / RB2256) (Sphingomonas alaskensis).